The sequence spans 463 residues: Phosphoglucosamine mutase (463 aa).

Catalysis depends on Ser101, which acts as the Phosphoserine intermediate. The Mg(2+) site is built by Ser101, Asp256, Asp258, and Asp260. A Phosphoserine modification is found at Ser101.

This sequence belongs to the phosphohexose mutase family. It depends on Mg(2+) as a cofactor. Activated by phosphorylation.

The catalysed reaction is alpha-D-glucosamine 1-phosphate = D-glucosamine 6-phosphate. Its function is as follows. Catalyzes the conversion of glucosamine-6-phosphate to glucosamine-1-phosphate. The protein is Phosphoglucosamine mutase of Desulforapulum autotrophicum (strain ATCC 43914 / DSM 3382 / VKM B-1955 / HRM2) (Desulfobacterium autotrophicum).